The chain runs to 263 residues: Palmitoyltransferase ZDHHC22 (263 aa).

Residues 1–9 (MLALRLLNV) are Cytoplasmic-facing. A helical transmembrane segment spans residues 10–30 (VAPAYFLCISLVTFVLQLFLF). Residues 31 to 48 (LPSMREDPTATPLFSPAV) lie on the Lumenal side of the membrane. The helical transmembrane segment at 49 to 69 (LHGALFLFLSANALGNYVLVI) threads the bilayer. Over 70-125 (QNSPDDLGTCQGTMSQRPQCPPPSTHFCRVCSRVTLRHDHHCFFTGNCIGSRNMRN) the chain is Cytoplasmic. Positions 91–131 (PPSTHFCRVCSRVTLRHDHHCFFTGNCIGSRNMRNFILFCL) constitute a DHHC domain. The S-palmitoyl cysteine intermediate role is filled by C111. Transmembrane regions (helical) follow at residues 126–146 (FILF…AGVA) and 147–167 (YISA…TLLP). Residues 168–182 (TSISQFFSGAVLGSD) are Cytoplasmic-facing. Residues 183 to 203 (MFVILMLYLWFAVGLACAGFC) traverse the membrane as a helical segment. The Lumenal portion of the chain corresponds to 204–263 (CHQLLLILRGQTRYQVRKGMAVRARPWRKNLQEVFGKRWLLGLLVPMFNVGTESSKQQDK).

This sequence belongs to the DHHC palmitoyltransferase family. As to quaternary structure, interacts with CNN3.

Its subcellular location is the endoplasmic reticulum membrane. The protein localises to the golgi apparatus membrane. The catalysed reaction is L-cysteinyl-[protein] + hexadecanoyl-CoA = S-hexadecanoyl-L-cysteinyl-[protein] + CoA. Palmitoyltransferase that could catalyze the addition of palmitate onto various protein substrates and be involved in a variety of cellular processes. Catalyzes the palmitoylation of KCNMA1, regulating localization of KCNMA1 to the plasma membrane. Might also mediate palmitoylation of CNN3. The polypeptide is Palmitoyltransferase ZDHHC22 (Mus musculus (Mouse)).